Here is a 258-residue protein sequence, read N- to C-terminus: Chymotrypsin-like elastase family member 1 (258 aa).

The signal sequence occupies residues 1 to 8 (MLVLYGHS). Positions 9 to 18 (TQDVPETNAR) are cleaved as a propeptide — activation peptide. The Peptidase S1 domain occupies 19-256 (VVGGTEARRN…YITWINNVIA (238 aa)). The cysteines at positions 48 and 64 are disulfide-linked. His-63 functions as the Charge relay system in the catalytic mechanism. Glu-77, Asn-79, Gln-82, and Glu-87 together coordinate Ca(2+). The N-linked (GlcNAc...) asparagine glycan is linked to Asn-79. The Charge relay system role is filled by Asp-111. 3 cysteine pairs are disulfide-bonded: Cys-145-Cys-212, Cys-176-Cys-192, and Cys-202-Cys-232. Ser-206 acts as the Charge relay system in catalysis. A glycan (N-linked (GlcNAc...) asparagine) is linked at Asn-233.

The protein belongs to the peptidase S1 family. Elastase subfamily. The cofactor is Ca(2+).

Its subcellular location is the secreted. It carries out the reaction Hydrolysis of proteins, including elastin. Preferential cleavage: Ala-|-Xaa.. Serine proteases that hydrolyze many proteins in addition to elastin. The protein is Chymotrypsin-like elastase family member 1 (CELA1) of Canis lupus familiaris (Dog).